Reading from the N-terminus, the 200-residue chain is dITP/XTP pyrophosphatase (200 aa).

8–13 contributes to the substrate binding site; that stretch reads TGNQGK. Asp-69 functions as the Proton acceptor in the catalytic mechanism. Residue Asp-69 coordinates Mg(2+). Residues Ser-70, 154–157, Lys-177, and 182–183 each bind substrate; these read FGYD and HR.

Belongs to the HAM1 NTPase family. In terms of assembly, homodimer. Mg(2+) serves as cofactor.

The enzyme catalyses XTP + H2O = XMP + diphosphate + H(+). It catalyses the reaction dITP + H2O = dIMP + diphosphate + H(+). It carries out the reaction ITP + H2O = IMP + diphosphate + H(+). In terms of biological role, pyrophosphatase that catalyzes the hydrolysis of nucleoside triphosphates to their monophosphate derivatives, with a high preference for the non-canonical purine nucleotides XTP (xanthosine triphosphate), dITP (deoxyinosine triphosphate) and ITP. Seems to function as a house-cleaning enzyme that removes non-canonical purine nucleotides from the nucleotide pool, thus preventing their incorporation into DNA/RNA and avoiding chromosomal lesions. The sequence is that of dITP/XTP pyrophosphatase from Vibrio cholerae serotype O1 (strain ATCC 39315 / El Tor Inaba N16961).